The chain runs to 278 residues: Chitosanase (278 aa).

A signal peptide spans 1-40; it reads MHSQHRTARIALAVVLTAIPASLATAGVGYASTQASTAVK. The Proton donor role is filled by Glu-62. The active-site Nucleophile is the Asp-80.

The protein belongs to the glycosyl hydrolase 46 family.

It localises to the secreted. It catalyses the reaction Endohydrolysis of beta-(1-&gt;4)-linkages between D-glucosamine residues in a partly acetylated chitosan.. Its function is as follows. Aids in the defense against invading fungal pathogens by degrading their cell wall chitosan. The polypeptide is Chitosanase (csn) (Streptomyces sp. (strain N174)).